A 92-amino-acid polypeptide reads, in one-letter code: Movement protein (92 aa).

The chain crosses the membrane as a helical span at residues 38–58 (VIALVVILVSVGVFYLAYTLF).

Belongs to the mastrevirus movement protein family. In terms of assembly, interacts with the capsid protein (CP). Part of a MP-CP-viral DNA complex.

The protein resides in the host membrane. Functionally, involved in the viral transport within, and between cells. In Phaseolus vulgaris (Kidney bean), this protein is Movement protein.